The primary structure comprises 148 residues: Large ribosomal subunit protein bL9 (148 aa).

It belongs to the bacterial ribosomal protein bL9 family.

Functionally, binds to the 23S rRNA. The sequence is that of Large ribosomal subunit protein bL9 from Parabacteroides distasonis (strain ATCC 8503 / DSM 20701 / CIP 104284 / JCM 5825 / NCTC 11152).